Consider the following 347-residue polypeptide: GMP reductase (347 aa).

108-131 (ADFEKTKQILDLNPALNFVCIDVA) contacts NADP(+). The K(+) site is built by glycine 181 and glycine 183. The active-site Thioimidate intermediate is cysteine 186. Position 216–239 (216–239 (IVSDGGCTTPGDVAKAFGGGADFV)) interacts with NADP(+).

This sequence belongs to the IMPDH/GMPR family. GuaC type 1 subfamily. In terms of assembly, homotetramer.

It carries out the reaction IMP + NH4(+) + NADP(+) = GMP + NADPH + 2 H(+). Its function is as follows. Catalyzes the irreversible NADPH-dependent deamination of GMP to IMP. It functions in the conversion of nucleobase, nucleoside and nucleotide derivatives of G to A nucleotides, and in maintaining the intracellular balance of A and G nucleotides. The chain is GMP reductase from Shigella boydii serotype 18 (strain CDC 3083-94 / BS512).